Reading from the N-terminus, the 90-residue chain is Probable Fe(2+)-trafficking protein (90 aa).

The protein belongs to the Fe(2+)-trafficking protein family.

Could be a mediator in iron transactions between iron acquisition and iron-requiring processes, such as synthesis and/or repair of Fe-S clusters in biosynthetic enzymes. In Chromohalobacter salexigens (strain ATCC BAA-138 / DSM 3043 / CIP 106854 / NCIMB 13768 / 1H11), this protein is Probable Fe(2+)-trafficking protein.